A 502-amino-acid chain; its full sequence is Probable malate:quinone oxidoreductase (502 aa).

The protein belongs to the MQO family. FAD is required as a cofactor.

The enzyme catalyses (S)-malate + a quinone = a quinol + oxaloacetate. The protein operates within carbohydrate metabolism; tricarboxylic acid cycle; oxaloacetate from (S)-malate (quinone route): step 1/1. The chain is Probable malate:quinone oxidoreductase from Synechococcus sp. (strain CC9605).